The primary structure comprises 177 residues: Putative HTH-type transcriptional regulator YvaV (177 aa).

The segment at residues 49-73 (LTELSEATGMSKTRMSQVVREMLDA) is a DNA-binding region (H-T-H motif).

Belongs to the GbsR family.

This Bacillus subtilis (strain 168) protein is Putative HTH-type transcriptional regulator YvaV (yvaV).